A 308-amino-acid polypeptide reads, in one-letter code: Cytochrome b (308 aa).

A run of 4 helical transmembrane segments spans residues 1 to 21 (FGSLLGLCLITQIITGLLLAM), 45 to 66 (WLIRNLHANGASFFFICIYLHI), 81 to 101 (WNIGVILLLTLMATAFVGYVL), and 146 to 166 (FFAFHFLLPFVIAGLTLVHLT). The heme b site is built by H51 and H65. 2 residues coordinate heme b: H150 and H164. H169 provides a ligand contact to a ubiquinone. The next 3 membrane-spanning stretches (helical) occupy residues 194-214 (IKDLLGFALMLIPLITLALFS), 256-276 (LGGVLALAASVLILFLIPLLH), and 288-308 (LSQILFWTLVADLLILTWVGS).

It belongs to the cytochrome b family. The cytochrome bc1 complex contains 11 subunits: 3 respiratory subunits (MT-CYB, CYC1 and UQCRFS1), 2 core proteins (UQCRC1 and UQCRC2) and 6 low-molecular weight proteins (UQCRH/QCR6, UQCRB/QCR7, UQCRQ/QCR8, UQCR10/QCR9, UQCR11/QCR10 and a cleavage product of UQCRFS1). This cytochrome bc1 complex then forms a dimer. Heme b serves as cofactor.

The protein resides in the mitochondrion inner membrane. Component of the ubiquinol-cytochrome c reductase complex (complex III or cytochrome b-c1 complex) that is part of the mitochondrial respiratory chain. The b-c1 complex mediates electron transfer from ubiquinol to cytochrome c. Contributes to the generation of a proton gradient across the mitochondrial membrane that is then used for ATP synthesis. This chain is Cytochrome b (MT-CYB), found in Corvus corax (Common raven).